Consider the following 175-residue polypeptide: Mating-type protein ALPHA1 (175 aa).

The segment at residues 88–144 (SSKKYLNSFMAFRAYYSQFGSGVKQNVLSSLLAEEWHADKMQHGIWDYFAQQYNFIN) is a DNA-binding region (alpha box).

It belongs to the MATALPHA1 family. As to quaternary structure, binds DNA with a high specificity in complex with an MCM1 dimer. Interacts with STE12.

The protein resides in the nucleus. Mating type proteins are sequence specific DNA-binding proteins that act as master switches in yeast differentiation by controlling gene expression in a cell type-specific fashion. Transcriptional coactivator that, in alpha-cells, binds cooperatively with MCM1 and STE12 to a DNA sequence termed the QP' element, to activate the transcription of alpha-specific genes. The polypeptide is Mating-type protein ALPHA1 (MATALPHA1) (Saccharomyces cerevisiae (strain ATCC 204508 / S288c) (Baker's yeast)).